The primary structure comprises 66 residues: Probable Sec-independent protein translocase protein TatE (66 aa).

Residues 1–21 form a helical membrane-spanning segment; sequence MEGISITKLLVIAVLIVLLFG. Residues 46 to 66 are disordered; it reads ETPAAKKSDGVEAAPRVENKE.

Belongs to the TatA/E family. TatE subfamily.

It localises to the cell inner membrane. In terms of biological role, part of the twin-arginine translocation (Tat) system that transports large folded proteins containing a characteristic twin-arginine motif in their signal peptide across membranes. TatE shares overlapping functions with TatA. This Edwardsiella ictaluri (strain 93-146) protein is Probable Sec-independent protein translocase protein TatE.